A 274-amino-acid chain; its full sequence is Syntaxin-12 (274 aa).

Disordered stretches follow at residues 1–20 (MSYG…PQPR) and 128–147 (EKES…EDRQ). Ser2 bears the N-acetylserine mark. Topologically, residues 2 to 250 (SYGPLDMYRN…AYYQKKSRKK (249 aa)) are cytoplasmic. Residues 33–130 (IQRISQATAQ…QRKVSEKEKE (98 aa)) adopt a coiled-coil conformation. Residues Ser139, Ser142, Ser218, and Ser225 each carry the phosphoserine modification. In terms of domain architecture, t-SNARE coiled-coil homology spans 178–240 (LELIKERETA…ERATDQLQRA (63 aa)). A helical; Anchor for type IV membrane protein transmembrane segment spans residues 251–271 (MCILVLVLSVIVTVLVVVIWV). Over 272–274 (ASK) the chain is Vesicular.

Belongs to the syntaxin family. In terms of assembly, associates with the BLOC-1 complex. Interacts with BLOC1S6. Interacts with NAPA and SNAP23. Identified in a complex containing STX6, STX12, VAMP4 and VTI1A. Interacts with GRIPAP1. Forms a complex with GRIP1, GRIA2 and NSG1; controls the intracellular fate of AMPAR and the endosomal sorting of the GRIA2 subunit toward recycling and membrane targeting. Interacts with NSG1. Interacts with TPC1. Interacts (via N-terminus) with VPS13B.

It is found in the endosome membrane. The protein resides in the golgi apparatus membrane. It localises to the endomembrane system. The protein localises to the early endosome membrane. Its subcellular location is the recycling endosome membrane. Its function is as follows. SNARE promoting fusion of transport vesicles with target membranes. Together with SNARE STX6, promotes movement of vesicles from endosomes to the cell membrane, and may therefore function in the endocytic recycling pathway. Through complex formation with GRIP1, GRIA2 and NSG1 controls the intracellular fate of AMPAR and the endosomal sorting of the GRIA2 subunit toward recycling and membrane targeting. The protein is Syntaxin-12 (Stx12) of Mus musculus (Mouse).